A 284-amino-acid polypeptide reads, in one-letter code: Polyamine aminopropyltransferase (284 aa).

The 236-residue stretch at 2–237 folds into the PABS domain; the sequence is ELWYTEQHTE…GHWLFGFASK (236 aa). Gln-31 is a binding site for S-methyl-5'-thioadenosine. Positions 62 and 86 each coordinate spermidine. S-methyl-5'-thioadenosine is bound by residues Glu-106 and 137–138; that span reads DG. Asp-155 functions as the Proton acceptor in the catalytic mechanism. 155–158 provides a ligand contact to spermidine; the sequence is DSTD. Pro-162 is an S-methyl-5'-thioadenosine binding site.

It belongs to the spermidine/spermine synthase family. In terms of assembly, homodimer or homotetramer.

The protein resides in the cytoplasm. The catalysed reaction is S-adenosyl 3-(methylsulfanyl)propylamine + putrescine = S-methyl-5'-thioadenosine + spermidine + H(+). Its pathway is amine and polyamine biosynthesis; spermidine biosynthesis; spermidine from putrescine: step 1/1. Its function is as follows. Catalyzes the irreversible transfer of a propylamine group from the amino donor S-adenosylmethioninamine (decarboxy-AdoMet) to putrescine (1,4-diaminobutane) to yield spermidine. This chain is Polyamine aminopropyltransferase, found in Alkaliphilus oremlandii (strain OhILAs) (Clostridium oremlandii (strain OhILAs)).